The following is a 332-amino-acid chain: Biotin synthase (332 aa).

The Radical SAM core domain occupies 51–278 (RTIQLSTLMS…KSYVRLSAGR (228 aa)). [4Fe-4S] cluster contacts are provided by C66, C70, and C73. Positions 110, 141, 201, and 273 each coordinate [2Fe-2S] cluster.

It belongs to the radical SAM superfamily. Biotin synthase family. In terms of assembly, homodimer. It depends on [4Fe-4S] cluster as a cofactor. [2Fe-2S] cluster is required as a cofactor.

It carries out the reaction (4R,5S)-dethiobiotin + (sulfur carrier)-SH + 2 reduced [2Fe-2S]-[ferredoxin] + 2 S-adenosyl-L-methionine = (sulfur carrier)-H + biotin + 2 5'-deoxyadenosine + 2 L-methionine + 2 oxidized [2Fe-2S]-[ferredoxin]. Its pathway is cofactor biosynthesis; biotin biosynthesis; biotin from 7,8-diaminononanoate: step 2/2. In terms of biological role, catalyzes the conversion of dethiobiotin (DTB) to biotin by the insertion of a sulfur atom into dethiobiotin via a radical-based mechanism. The polypeptide is Biotin synthase (Haemophilus influenzae (strain PittGG)).